The chain runs to 259 residues: Ribonuclease PH (259 aa).

Phosphate is bound by residues Arg-88 and Gly-126 to Arg-128.

Belongs to the RNase PH family. In terms of assembly, homohexameric ring arranged as a trimer of dimers.

The enzyme catalyses tRNA(n+1) + phosphate = tRNA(n) + a ribonucleoside 5'-diphosphate. Its function is as follows. Phosphorolytic 3'-5' exoribonuclease that plays an important role in tRNA 3'-end maturation. Removes nucleotide residues following the 3'-CCA terminus of tRNAs; can also add nucleotides to the ends of RNA molecules by using nucleoside diphosphates as substrates, but this may not be physiologically important. Probably plays a role in initiation of 16S rRNA degradation (leading to ribosome degradation) during starvation. This Mycobacterium leprae (strain Br4923) protein is Ribonuclease PH.